Reading from the N-terminus, the 452-residue chain is Tubulin alpha-6 chain (452 aa).

GTP-binding residues include Gln-11, Glu-69, Ser-138, Gly-142, Thr-143, Thr-177, Asn-204, and Asn-226. Residue Glu-69 coordinates Mg(2+). Glu-252 is a catalytic residue.

It belongs to the tubulin family. In terms of assembly, dimer of alpha and beta chains. A typical microtubule is a hollow water-filled tube with an outer diameter of 25 nm and an inner diameter of 15 nM. Alpha-beta heterodimers associate head-to-tail to form protofilaments running lengthwise along the microtubule wall with the beta-tubulin subunit facing the microtubule plus end conferring a structural polarity. Microtubules usually have 13 protofilaments but different protofilament numbers can be found in some organisms and specialized cells. It depends on Mg(2+) as a cofactor.

The protein localises to the cytoplasm. Its subcellular location is the cytoskeleton. It localises to the spindle. The enzyme catalyses GTP + H2O = GDP + phosphate + H(+). Functionally, tubulin is the major constituent of microtubules, a cylinder consisting of laterally associated linear protofilaments composed of alpha- and beta-tubulin heterodimers. Microtubules grow by the addition of GTP-tubulin dimers to the microtubule end, where a stabilizing cap forms. Below the cap, tubulin dimers are in GDP-bound state, owing to GTPase activity of alpha-tubulin. The polypeptide is Tubulin alpha-6 chain (TUBA6) (Naegleria pringsheimi (Amoeba)).